A 508-amino-acid chain; its full sequence is uncharacterized protein (508 aa).

The protein resides in the virion. This is an uncharacterized protein from Acanthamoeba polyphaga mimivirus (APMV).